Here is a 37-residue protein sequence, read N- to C-terminus: Large ribosomal subunit protein bL36 (37 aa).

Belongs to the bacterial ribosomal protein bL36 family.

The sequence is that of Large ribosomal subunit protein bL36 from Clostridium kluyveri (strain NBRC 12016).